A 200-amino-acid polypeptide reads, in one-letter code: Inner membrane-spanning protein YciB (200 aa).

Transmembrane regions (helical) follow at residues 7-27 (HPLFKLATELGPLIVFFVVNA), 32-52 (FAATGAFMVAIVAAMIASYVV), 56-76 (VPLMAIVTGIVVLVFGTLTLV), 93-113 (LFAAVLGGGLLFNRSFIAIMF), 126-146 (ILTFRWALFFAAMAVLNEIIW), and 153-173 (FWVGFKAFGVVPLTMIFAIAQ).

Belongs to the YciB family.

Its subcellular location is the cell inner membrane. In terms of biological role, plays a role in cell envelope biogenesis, maintenance of cell envelope integrity and membrane homeostasis. In Bradyrhizobium sp. (strain BTAi1 / ATCC BAA-1182), this protein is Inner membrane-spanning protein YciB.